A 306-amino-acid polypeptide reads, in one-letter code: UDP-N-acetylenolpyruvoylglucosamine reductase (306 aa).

The FAD-binding PCMH-type domain occupies 34-198 (VGGPADLLIT…LEVTFKLHNS (165 aa)). Residue R177 is part of the active site. S227 functions as the Proton donor in the catalytic mechanism. E297 is a catalytic residue.

The protein belongs to the MurB family. FAD is required as a cofactor.

Its subcellular location is the cytoplasm. The enzyme catalyses UDP-N-acetyl-alpha-D-muramate + NADP(+) = UDP-N-acetyl-3-O-(1-carboxyvinyl)-alpha-D-glucosamine + NADPH + H(+). It participates in cell wall biogenesis; peptidoglycan biosynthesis. In terms of biological role, cell wall formation. The polypeptide is UDP-N-acetylenolpyruvoylglucosamine reductase (Clostridium botulinum (strain Langeland / NCTC 10281 / Type F)).